Reading from the N-terminus, the 316-residue chain is Pantothenate kinase (316 aa).

95–102 provides a ligand contact to ATP; the sequence is GSVSVGKS.

Belongs to the prokaryotic pantothenate kinase family.

It is found in the cytoplasm. It carries out the reaction (R)-pantothenate + ATP = (R)-4'-phosphopantothenate + ADP + H(+). It functions in the pathway cofactor biosynthesis; coenzyme A biosynthesis; CoA from (R)-pantothenate: step 1/5. This is Pantothenate kinase from Haemophilus ducreyi (strain 35000HP / ATCC 700724).